The following is a 355-amino-acid chain: Guanine nucleotide-binding protein alpha-12 subunit (355 aa).

Positions 28–355 (RQINLLLLGS…EQNLKTLMMQ (328 aa)) constitute a G-alpha domain. Residues 31-44 (NLLLLGSGESGKST) are G1 motif. Residues 36–43 (GSGESGKS), 176–182 (LFCRKAT), 201–205 (DVGGQ), 270–273 (NKND), and A327 each bind GTP. The Mg(2+) site is built by S43 and T182. The G2 motif stretch occupies residues 174–182 (DILFCRKAT). Residues 197 to 206 (FRFIDVGGQR) form a G3 motif region. A G4 motif region spans residues 266–273 (ILFMNKND). A G5 motif region spans residues 325–330 (TTAVDT).

This sequence belongs to the G-alpha family. As to quaternary structure, g proteins are composed of 3 units; alpha, beta and gamma. The alpha chain contains the guanine nucleotide binding site.

Its function is as follows. Guanine nucleotide-binding proteins (G proteins) are involved as modulators or transducers in various transmembrane signaling systems. May play a role in resistance to fungal infection in the epidermis by regulating the up-regulation of several antimicrobial peptides of the NLP and CNC families. Upstream of plc-3, egl-8, tpa-1 and the p38-like pathway, required for the expression of antimicrobial peptide nlp-29 in the epidermis in response to fungal infection or physical injury. The sequence is that of Guanine nucleotide-binding protein alpha-12 subunit (gpa-12) from Caenorhabditis briggsae.